Consider the following 314-residue polypeptide: L-lactate dehydrogenase 1 (314 aa).

NAD(+) is bound by residues valine 16, aspartate 37, lysine 42, tyrosine 68, and 82-83; that span reads GL. Substrate is bound by residues glutamine 85, arginine 91, and 123–126; that span reads NPVD. Residues 121 to 123 and serine 146 contribute to the NAD(+) site; that span reads ATN. 151 to 154 is a substrate binding site; the sequence is DSAR. Arginine 156 and histidine 171 together coordinate beta-D-fructose 1,6-bisphosphate. The Proton acceptor role is filled by histidine 178. Phosphotyrosine is present on tyrosine 223. Threonine 232 contacts substrate.

Belongs to the LDH/MDH superfamily. LDH family. As to quaternary structure, homotetramer.

Its subcellular location is the cytoplasm. The catalysed reaction is (S)-lactate + NAD(+) = pyruvate + NADH + H(+). It participates in fermentation; pyruvate fermentation to lactate; (S)-lactate from pyruvate: step 1/1. With respect to regulation, allosterically activated by fructose 1,6-bisphosphate (FBP). Catalyzes the conversion of lactate to pyruvate. This Bacillus cereus (strain ATCC 14579 / DSM 31 / CCUG 7414 / JCM 2152 / NBRC 15305 / NCIMB 9373 / NCTC 2599 / NRRL B-3711) protein is L-lactate dehydrogenase 1.